The following is a 327-amino-acid chain: ATP-dependent (S)-NAD(P)H-hydrate dehydratase (327 aa).

Positions 11–313 (LLTRVKRIIP…RHVGKAYNAL (303 aa)) constitute a YjeF C-terminal domain. Residues glycine 121 and 174 to 180 (NVIEFKR) each bind (6S)-NADPHX. Residues 209 to 213 (KGQSD) and 228 to 237 (GGLKRCGGQG) each bind ATP. Aspartate 238 serves as a coordination point for (6S)-NADPHX.

Belongs to the NnrD/CARKD family. The cofactor is Mg(2+).

It is found in the cytoplasm. The catalysed reaction is (6S)-NADHX + ATP = ADP + phosphate + NADH + H(+). The enzyme catalyses (6S)-NADPHX + ATP = ADP + phosphate + NADPH + H(+). Its function is as follows. Catalyzes the dehydration of the S-form of NAD(P)HX at the expense of ATP, which is converted to ADP. Together with NAD(P)HX epimerase, which catalyzes the epimerization of the S- and R-forms, the enzyme allows the repair of both epimers of NAD(P)HX, a damaged form of NAD(P)H that is a result of enzymatic or heat-dependent hydration. The polypeptide is ATP-dependent (S)-NAD(P)H-hydrate dehydratase (Schizosaccharomyces pombe (strain 972 / ATCC 24843) (Fission yeast)).